The following is a 349-amino-acid chain: Phosphate acetyltransferase (349 aa).

It belongs to the phosphate acetyltransferase and butyryltransferase family.

The protein localises to the cytoplasm. The catalysed reaction is acetyl-CoA + phosphate = acetyl phosphate + CoA. It participates in metabolic intermediate biosynthesis; acetyl-CoA biosynthesis; acetyl-CoA from acetate: step 2/2. In Rickettsia felis (strain ATCC VR-1525 / URRWXCal2) (Rickettsia azadi), this protein is Phosphate acetyltransferase (pta).